The sequence spans 373 residues: MAKRDYYEVLGVNRDATDEEIKKAYRKLAMKYHPDRNPDNPKAEEHFKEAKEAYEVLSDDQKRAAYDQYGHAGVDPSAAAGAGAGGFGNFADAFGDIFGDIFGGGGGGRRSNVYRGADLRYNMEISLEEAARGTETKIRIPVMAECETCHGSGARPGTQPVTCSTCGGHGQVRMQQGFFSVQQTCPKCHGSGKMVKDPCPTCHGGGRVKQHKTLSVKIPAGVDEGDRIRLSGEGEAGVNGGPPGDLYVVVHLKKHPIFERDGANLHCEMPISFTTAALGGEIEIPTLDGHAKMKVPPETQTGAVFRLRGKGIKPLRSNEHGDLFCHVIVETPVKLTERQKELLRELEDINQQDSGKHSPREKSWMTKVKDFFQ.

The region spanning 5-70 is the J domain; it reads DYYEVLGVNR…QKRAAYDQYG (66 aa). The CR-type zinc finger occupies 133 to 211; it reads GTETKIRIPV…CHGGGRVKQH (79 aa). Residues Cys-146, Cys-149, Cys-163, Cys-166, Cys-185, Cys-188, Cys-199, and Cys-202 each contribute to the Zn(2+) site. 4 CXXCXGXG motif repeats span residues 146 to 153, 163 to 170, 185 to 192, and 199 to 206; these read CETCHGSG, CSTCGGHG, CPKCHGSG, and CPTCHGGG. Positions 346–373 are disordered; the sequence is LEDINQQDSGKHSPREKSWMTKVKDFFQ. Over residues 354–373 the composition is skewed to basic and acidic residues; it reads SGKHSPREKSWMTKVKDFFQ.

It belongs to the DnaJ family. Homodimer. Zn(2+) serves as cofactor.

The protein localises to the cytoplasm. Its function is as follows. Participates actively in the response to hyperosmotic and heat shock by preventing the aggregation of stress-denatured proteins and by disaggregating proteins, also in an autonomous, DnaK-independent fashion. Unfolded proteins bind initially to DnaJ; upon interaction with the DnaJ-bound protein, DnaK hydrolyzes its bound ATP, resulting in the formation of a stable complex. GrpE releases ADP from DnaK; ATP binding to DnaK triggers the release of the substrate protein, thus completing the reaction cycle. Several rounds of ATP-dependent interactions between DnaJ, DnaK and GrpE are required for fully efficient folding. Also involved, together with DnaK and GrpE, in the DNA replication of plasmids through activation of initiation proteins. The protein is Chaperone protein DnaJ of Methylobacillus flagellatus (strain ATCC 51484 / DSM 6875 / VKM B-1610 / KT).